We begin with the raw amino-acid sequence, 191 residues long: Protein GrpE (191 aa).

Over residues 1 to 11 (MTDSSNAHEAE) the composition is skewed to basic and acidic residues. 2 disordered regions span residues 1 to 22 (MTDS…DNEI) and 172 to 191 (KVSK…NNNE).

Belongs to the GrpE family. In terms of assembly, homodimer.

The protein localises to the cytoplasm. Functionally, participates actively in the response to hyperosmotic and heat shock by preventing the aggregation of stress-denatured proteins, in association with DnaK and GrpE. It is the nucleotide exchange factor for DnaK and may function as a thermosensor. Unfolded proteins bind initially to DnaJ; upon interaction with the DnaJ-bound protein, DnaK hydrolyzes its bound ATP, resulting in the formation of a stable complex. GrpE releases ADP from DnaK; ATP binding to DnaK triggers the release of the substrate protein, thus completing the reaction cycle. Several rounds of ATP-dependent interactions between DnaJ, DnaK and GrpE are required for fully efficient folding. In Chlamydia abortus (strain DSM 27085 / S26/3) (Chlamydophila abortus), this protein is Protein GrpE.